A 156-amino-acid chain; its full sequence is Small ribosomal subunit protein eS19A (156 aa).

The protein belongs to the eukaryotic ribosomal protein eS19 family.

In Drosophila melanogaster (Fruit fly), this protein is Small ribosomal subunit protein eS19A (RpS19a).